The primary structure comprises 266 residues: Ribosome-recycling factor, chloroplastic (266 aa).

The span at 1–26 (MPPLHAVSPAAAAAPPRALSSAARVP) shows a compositional bias: low complexity. A disordered region spans residues 1–30 (MPPLHAVSPAAAAAPPRALSSAARVPQRPG). Residues 1–74 (MPPLHAVSPA…SDKRAVLRHA (74 aa)) constitute a chloroplast transit peptide. 2 coiled-coil regions span residues 75 to 109 (TIEEIEAEKSVIEDQARERMEKAIETVQNNFNTVR) and 207 to 266 (VAIR…LMKI).

It belongs to the RRF family.

It is found in the plastid. Its subcellular location is the chloroplast. In terms of biological role, responsible for the release of ribosomes from messenger RNA at the termination of chloroplastic protein biosynthesis. This chain is Ribosome-recycling factor, chloroplastic, found in Oryza sativa subsp. indica (Rice).